Here is a 444-residue protein sequence, read N- to C-terminus: Methylenetetrahydrofolate--tRNA-(uracil-5-)-methyltransferase TrmFO (444 aa).

9–14 (GAGMAG) is a binding site for FAD.

Belongs to the MnmG family. TrmFO subfamily. It depends on FAD as a cofactor.

The protein resides in the cytoplasm. It carries out the reaction uridine(54) in tRNA + (6R)-5,10-methylene-5,6,7,8-tetrahydrofolate + NADH + H(+) = 5-methyluridine(54) in tRNA + (6S)-5,6,7,8-tetrahydrofolate + NAD(+). It catalyses the reaction uridine(54) in tRNA + (6R)-5,10-methylene-5,6,7,8-tetrahydrofolate + NADPH + H(+) = 5-methyluridine(54) in tRNA + (6S)-5,6,7,8-tetrahydrofolate + NADP(+). In terms of biological role, catalyzes the folate-dependent formation of 5-methyl-uridine at position 54 (M-5-U54) in all tRNAs. This chain is Methylenetetrahydrofolate--tRNA-(uracil-5-)-methyltransferase TrmFO, found in Cereibacter sphaeroides (strain KD131 / KCTC 12085) (Rhodobacter sphaeroides).